A 686-amino-acid chain; its full sequence is Glycine--tRNA ligase beta subunit (686 aa).

It belongs to the class-II aminoacyl-tRNA synthetase family. In terms of assembly, tetramer of two alpha and two beta subunits.

It localises to the cytoplasm. It carries out the reaction tRNA(Gly) + glycine + ATP = glycyl-tRNA(Gly) + AMP + diphosphate. This Geobacter metallireducens (strain ATCC 53774 / DSM 7210 / GS-15) protein is Glycine--tRNA ligase beta subunit.